We begin with the raw amino-acid sequence, 364 residues long: Aminomethyltransferase (364 aa).

The protein belongs to the GcvT family. The glycine cleavage system is composed of four proteins: P, T, L and H.

It catalyses the reaction N(6)-[(R)-S(8)-aminomethyldihydrolipoyl]-L-lysyl-[protein] + (6S)-5,6,7,8-tetrahydrofolate = N(6)-[(R)-dihydrolipoyl]-L-lysyl-[protein] + (6R)-5,10-methylene-5,6,7,8-tetrahydrofolate + NH4(+). The glycine cleavage system catalyzes the degradation of glycine. The chain is Aminomethyltransferase from Citrobacter koseri (strain ATCC BAA-895 / CDC 4225-83 / SGSC4696).